Here is a 419-residue protein sequence, read N- to C-terminus: Multifunctional CCA protein (419 aa).

ATP is bound by residues Gly-8 and Arg-11. 2 residues coordinate CTP: Gly-8 and Arg-11. Residues Asp-21 and Asp-23 each contribute to the Mg(2+) site. Arg-91, Arg-137, and Arg-140 together coordinate ATP. 3 residues coordinate CTP: Arg-91, Arg-137, and Arg-140. An HD domain is found at 226–327 (TGVHLMMVLD…VRLFDRCDAW (102 aa)).

The protein belongs to the tRNA nucleotidyltransferase/poly(A) polymerase family. Bacterial CCA-adding enzyme type 1 subfamily. In terms of assembly, monomer. Can also form homodimers and oligomers. Requires Mg(2+) as cofactor. Ni(2+) is required as a cofactor.

It catalyses the reaction a tRNA precursor + 2 CTP + ATP = a tRNA with a 3' CCA end + 3 diphosphate. The enzyme catalyses a tRNA with a 3' CCA end + 2 CTP + ATP = a tRNA with a 3' CCACCA end + 3 diphosphate. In terms of biological role, catalyzes the addition and repair of the essential 3'-terminal CCA sequence in tRNAs without using a nucleic acid template. Adds these three nucleotides in the order of C, C, and A to the tRNA nucleotide-73, using CTP and ATP as substrates and producing inorganic pyrophosphate. tRNA 3'-terminal CCA addition is required both for tRNA processing and repair. Also involved in tRNA surveillance by mediating tandem CCA addition to generate a CCACCA at the 3' terminus of unstable tRNAs. While stable tRNAs receive only 3'-terminal CCA, unstable tRNAs are marked with CCACCA and rapidly degraded. The sequence is that of Multifunctional CCA protein from Leptothrix cholodnii (strain ATCC 51168 / LMG 8142 / SP-6) (Leptothrix discophora (strain SP-6)).